The following is an 88-amino-acid chain: UPF0250 protein Sbal_3280 (88 aa).

This sequence belongs to the UPF0250 family.

In Shewanella baltica (strain OS155 / ATCC BAA-1091), this protein is UPF0250 protein Sbal_3280.